The chain runs to 134 residues: Profilin-2 (134 aa).

Cysteines 13 and 118 form a disulfide. Residues 84 to 100 (AVIRGKKGSGGITIKET) carry the Involved in PIP2 interaction motif. Thr-114 is modified (phosphothreonine).

This sequence belongs to the profilin family. Occurs in many kinds of cells as a complex with monomeric actin in a 1:1 ratio. In terms of processing, phosphorylated by MAP kinases.

It localises to the cytoplasm. Its subcellular location is the cytoskeleton. Its function is as follows. Binds to actin and affects the structure of the cytoskeleton. At high concentrations, profilin prevents the polymerization of actin, whereas it enhances it at low concentrations. The sequence is that of Profilin-2 from Olea europaea (Common olive).